Reading from the N-terminus, the 341-residue chain is MKSVTLKELSLLLDGVVQGDETLVINSVATLEHATAGQISFLANSKYRAQLESTQASAVLLSAKDAQDYSGTALVVKDPYVGFARVAQLLDTTPKAAIGIHPSAQIDPSALLGEGVAIGANAVIGANVILGENVQIGAGTVIGQDCIIGSNTRLWANVTLYHNVHLGQDCIIHSGAIIGSDGFGYANERGQWIKIPQTGGVRIGDRVEIGASSTIDRGALGHTEIHNGVIIDNQVQVAHNDIIGENTAIAGSTTLAGSVTIGKHCIIGGNCAIAGHLTIADGVHLSGATNVTGNMREPGLYSSATVAMENKVWRKNTVRFRQLDELFQRVKTLEKNSNTPE.

Residue His-239 is the Proton acceptor of the active site.

It belongs to the transferase hexapeptide repeat family. LpxD subfamily. Homotrimer.

The enzyme catalyses a UDP-3-O-[(3R)-3-hydroxyacyl]-alpha-D-glucosamine + a (3R)-hydroxyacyl-[ACP] = a UDP-2-N,3-O-bis[(3R)-3-hydroxyacyl]-alpha-D-glucosamine + holo-[ACP] + H(+). It functions in the pathway bacterial outer membrane biogenesis; LPS lipid A biosynthesis. Its function is as follows. Catalyzes the N-acylation of UDP-3-O-acylglucosamine using 3-hydroxyacyl-ACP as the acyl donor. Is involved in the biosynthesis of lipid A, a phosphorylated glycolipid that anchors the lipopolysaccharide to the outer membrane of the cell. This chain is UDP-3-O-acylglucosamine N-acyltransferase, found in Shewanella sp. (strain MR-7).